Reading from the N-terminus, the 404-residue chain is MEHVPNEHGRFGDFGGKFVPETLMLPLEEIETELDKALADESFRQEYIRILQHYSGRPTPLTFAPNLTRQLGGAKIYLKREDLNHTGAHKINNAIGQALLAKRMGKKKLIAETGAGQHGVAAATVAAHFGMECIVFMGEEDMKRQELNVFRMKLLGAEVVPVLSGNRTLKDATNEAIRYWVAHCDDHFYMIGSVVGPHPYPKMVREFQRVIGDEAKEQFLAGEGTLPDVIVACVGGGSNAIGMFYPFLQDDVRLVGVEAAGKGIDTPHHAATIAKGTKGVIHGAMTYLLQDEYGQIIEPYSISAGLDYPGVGPEHAYLASIGRVRYESVTDEEAVAAFQLLAQTEGIIPAIESAHAVAKAVELARQMTPDETVLICLSGRGDKDVQMMMHHLGVKEGEDVASAR.

Residue lysine 90 is modified to N6-(pyridoxal phosphate)lysine.

The protein belongs to the TrpB family. In terms of assembly, tetramer of two alpha and two beta chains. Pyridoxal 5'-phosphate is required as a cofactor.

It catalyses the reaction (1S,2R)-1-C-(indol-3-yl)glycerol 3-phosphate + L-serine = D-glyceraldehyde 3-phosphate + L-tryptophan + H2O. It functions in the pathway amino-acid biosynthesis; L-tryptophan biosynthesis; L-tryptophan from chorismate: step 5/5. Functionally, the beta subunit is responsible for the synthesis of L-tryptophan from indole and L-serine. This Geobacillus thermodenitrificans (strain NG80-2) protein is Tryptophan synthase beta chain.